Reading from the N-terminus, the 277-residue chain is uncharacterized protein (277 aa).

The SWIM-type zinc-finger motif lies at 139–167 (TARELSLDCSCPDYAVPCKHLAATFYLLA).

This is an uncharacterized protein from Mycobacterium tuberculosis (strain ATCC 25618 / H37Rv).